Reading from the N-terminus, the 195-residue chain is U8 snoRNA-decapping enzyme (195 aa).

Positions glycine 18–glutamate 173 constitute a Nudix hydrolase domain. The substrate site is built by histidine 24, arginine 50, and phenylalanine 57. Glycine 59, glutamate 76, glutamate 80, and histidine 99 together coordinate Mn(2+). The Nudix box motif lies at phenylalanine 61 to glycine 82. Glutamine 170 is a substrate binding site. Glutamate 173 is a Mn(2+) binding site.

Belongs to the Nudix hydrolase family. NUDT16 subfamily. In terms of assembly, homodimer. It depends on Mg(2+) as a cofactor. Mn(2+) is required as a cofactor. Co(2+) serves as cofactor. As to expression, expressed strongly in lung, kidney, adrenal gland, testis, heart and brain.

It localises to the nucleus. The protein resides in the nucleoplasm. The protein localises to the nucleolus. Its subcellular location is the cytoplasm. It catalyses the reaction a 5'-end (N(7)-methyl 5'-triphosphoguanosine)-ribonucleoside in mRNA + H2O = N(7)-methyl-GDP + a 5'-end phospho-ribonucleoside in mRNA + 2 H(+). It carries out the reaction IDP + H2O = IMP + phosphate + H(+). The enzyme catalyses dIDP + H2O = dIMP + phosphate + H(+). The catalysed reaction is a 5'-end NAD(+)-phospho-ribonucleoside in mRNA + H2O = a 5'-end phospho-adenosine-phospho-ribonucleoside in mRNA + beta-nicotinamide D-ribonucleotide + 2 H(+). It catalyses the reaction a 5'-end FAD-phospho-ribonucleoside in mRNA + H2O = a 5'-end phospho-adenosine-phospho-ribonucleoside in mRNA + FMN + 2 H(+). It carries out the reaction a 5'-end CoA-ribonucleoside in mRNA + H2O = a 5'-end phospho-adenosine-phospho-ribonucleoside in mRNA + (R)-4'-phosphopantetheine + 2 H(+). The phosphatase activity is inhibited by the product IMP. RNA-binding and decapping enzyme that catalyzes the cleavage of the cap structure of snoRNAs and mRNAs in a metal-dependent manner. Part of the U8 snoRNP complex that is required for the accumulation of mature 5.8S and 28S rRNA. Has diphosphatase activity and removes m7G and/or m227G caps from U8 snoRNA and leaves a 5'monophosphate on the RNA. Also catalyzes the cleavage of the cap structure on mRNAs. Does not hydrolyze cap analog structures like 7-methylguanosine nucleoside triphosphate (m7GpppG). Also hydrolysis m7G- and m227G U3-capped RNAs but with less efficiencies. Has broad substrate specificity with manganese or cobalt as cofactor and can act on various RNA species. Binds to the U8 snoRNA; metal is not required for RNA-binding. May play a role in the regulation of snoRNAs and mRNAs degradation. Also acts as a phosphatase; hydrolyzes the non-canonical purine nucleotides inosine diphosphate (IDP) and deoxyinosine diphosphate (dITP) as well as guanosine diphosphate (GDP), deoxyguanosine diphosphate (dGDP), xanthine diphosphate (XDP), inosine triphosphate (ITP) and deoxyinosine triphosphate (ITP) to their respective monophosphate derivatives and does not distinguish between the deoxy- and ribose forms. The order of activity with different substrates is IDP &gt; dIDP &gt;&gt; GDP = dGDP &gt; XDP = ITP = dITP. Binds strongly to GTP, ITP and XTP. Participates in the hydrolysis of dIDP/IDP and probably excludes non-canonical purines from RNA and DNA precursor pools, thus preventing their incorporation into RNA and DNA and avoiding chromosomal lesions. Exhibits decapping activity towards NAD-capped RNAs and FAD-capped RNAs. Exhibits decapping activity towards dpCoA-capped RNAs in vitro. This chain is U8 snoRNA-decapping enzyme (NUDT16), found in Homo sapiens (Human).